Reading from the N-terminus, the 668-residue chain is Golgin subfamily A member 6-like protein 1 (668 aa).

Disordered regions lie at residues 1–120 (MLMW…HQEA), 323–356 (IREQ…RQEE), 384–466 (EKMH…EMWR), 481–591 (KEKM…REQE), and 603–639 (EQEE…MRRQ). Residues 15 to 41 (LPTHPHLPTHPHLPTHPHLPTHPHLPT) show a composition bias toward basic residues. Residues 51–72 (MSKETRQSKLAEAKEQLTDHHP) are compositionally biased toward basic and acidic residues. Polar residues-rich tracts occupy residues 73–83 (QTNPSVGTAAS) and 91–103 (NNGT…TSGG). A compositionally biased stretch (basic and acidic residues) spans 106-120 (SPEDEQKASHQHQEA). The stretch at 177–663 (LEQALSAVAT…EEKMQEHQEH (487 aa)) forms a coiled coil.

This sequence belongs to the GOLGA6 family.

This chain is Golgin subfamily A member 6-like protein 1 (GOLGA6L1), found in Homo sapiens (Human).